We begin with the raw amino-acid sequence, 243 residues long: MADWLYQYPPLLAGTLIKRYKRFLADIELDTGEVVTAHCPNTGPMTGMCAPHSRVQISQSNNPKRKLAYTWEMIEVCDTEPTWVGVNTQIPNLVVKQLLQNRLLPTLGEYDQVKSEVRYGREKSRIDFLLTGTAQPAYIEVKSTTWAIEKQALFPDTVTIRGQKHIRELISVLPAAQAYLLFFINRADCTTFAPGDQADPEYGKLLREAVATGVGLLPCRFEITPEGIRYLGLATVEESSLTR.

It belongs to the SfsA family.

The sequence is that of Sugar fermentation stimulation protein homolog from Acaryochloris marina (strain MBIC 11017).